The chain runs to 409 residues: Putative competence-damage inducible protein (409 aa).

This sequence belongs to the CinA family.

In Clostridium botulinum (strain Langeland / NCTC 10281 / Type F), this protein is Putative competence-damage inducible protein.